We begin with the raw amino-acid sequence, 117 residues long: Putative pterin-4-alpha-carbinolamine dehydratase (117 aa).

This sequence belongs to the pterin-4-alpha-carbinolamine dehydratase family.

It catalyses the reaction (4aS,6R)-4a-hydroxy-L-erythro-5,6,7,8-tetrahydrobiopterin = (6R)-L-erythro-6,7-dihydrobiopterin + H2O. The protein is Putative pterin-4-alpha-carbinolamine dehydratase of Colwellia psychrerythraea (strain 34H / ATCC BAA-681) (Vibrio psychroerythus).